We begin with the raw amino-acid sequence, 712 residues long: Aryl hydrocarbon receptor nuclear translocator 2 (712 aa).

The segment at 36 to 73 (AGAMPARGGKRRSGMDFDDEDGEGPSKFSRENHSEIER) is disordered. Arginine 42 carries the omega-N-methylarginine modification. Basic and acidic residues predominate over residues 63 to 73 (FSRENHSEIER). A bHLH domain is found at 63–116 (FSRENHSEIERRRRNKMTQYITELSDMVPTCSALARKPDKLTILRMAVSHMKSM). PAS domains lie at 134-209 (TEQE…MTGR) and 323-393 (PVCM…VKLK). Residues 398 to 441 (SVMYRFRTKNREWLLIRTSSFTFQNPYSDEIEYVICTNTNVKQL) enclose the PAC domain. A disordered region spans residues 573–712 (AWTGSRPPFP…DLGMFPPFSE (140 aa)). Composition is skewed to low complexity over residues 597 to 626 (SSHPYPADPSSYSPLSSPAASSPSGNAYPS) and 653 to 675 (SQWQSQHHGQQSGEQHSHQQPGQ).

As to quaternary structure, efficient DNA binding requires dimerization with another bHLH protein. Heterodimer with NPAS4 or SIM1. Heterodimer with the aryl hydrocarbon receptor (AHR) or the SIM1 protein. Interacts with TACC3. As to expression, restricted to adult brain and kidney.

The protein resides in the nucleus. Functionally, transcription factor that plays a role in the development of the hypothalamo-pituitary axis, postnatal brain growth, and visual and renal function. Specifically recognizes the xenobiotic response element (XRE). The sequence is that of Aryl hydrocarbon receptor nuclear translocator 2 (Arnt2) from Mus musculus (Mouse).